The primary structure comprises 294 residues: 4-hydroxy-tetrahydrodipicolinate synthase (294 aa).

Thr-47 is a pyruvate binding site. The active-site Proton donor/acceptor is Tyr-135. Lys-163 acts as the Schiff-base intermediate with substrate in catalysis. Ile-206 is a pyruvate binding site.

This sequence belongs to the DapA family. Homodimer.

The protein resides in the cytoplasm. It carries out the reaction L-aspartate 4-semialdehyde + pyruvate = (2S,4S)-4-hydroxy-2,3,4,5-tetrahydrodipicolinate + H2O + H(+). It functions in the pathway amino-acid biosynthesis; L-lysine biosynthesis via DAP pathway; (S)-tetrahydrodipicolinate from L-aspartate: step 3/4. Its function is as follows. Catalyzes the condensation of (S)-aspartate-beta-semialdehyde [(S)-ASA] and pyruvate to 4-hydroxy-tetrahydrodipicolinate (HTPA). The chain is 4-hydroxy-tetrahydrodipicolinate synthase from Staphylococcus carnosus (strain TM300).